The sequence spans 319 residues: Beta-ketoacyl-[acyl-carrier-protein] synthase III (319 aa).

Residues C110 and H246 contribute to the active site. Residues 247-251 (QANYR) form an ACP-binding region. The active site involves N276.

This sequence belongs to the thiolase-like superfamily. FabH family. As to quaternary structure, homodimer.

Its subcellular location is the cytoplasm. It carries out the reaction malonyl-[ACP] + acetyl-CoA + H(+) = 3-oxobutanoyl-[ACP] + CO2 + CoA. Its pathway is lipid metabolism; fatty acid biosynthesis. In terms of biological role, catalyzes the condensation reaction of fatty acid synthesis by the addition to an acyl acceptor of two carbons from malonyl-ACP. Catalyzes the first condensation reaction which initiates fatty acid synthesis and may therefore play a role in governing the total rate of fatty acid production. Possesses both acetoacetyl-ACP synthase and acetyl transacylase activities. Its substrate specificity determines the biosynthesis of branched-chain and/or straight-chain of fatty acids. The sequence is that of Beta-ketoacyl-[acyl-carrier-protein] synthase III from Lactobacillus delbrueckii subsp. bulgaricus (strain ATCC BAA-365 / Lb-18).